Reading from the N-terminus, the 424-residue chain is CinA-like protein (424 aa).

Belongs to the CinA family.

The polypeptide is CinA-like protein (Shewanella denitrificans (strain OS217 / ATCC BAA-1090 / DSM 15013)).